The chain runs to 512 residues: MNLSIMVQGTASDVGKSVLVAGLCRIFMQDGYRCAPFKSQNMALNSGITPQGEEMGRAQIFQAEAAGIAPDVRMNPVLLKPTSDRKAQVVLMGKVACNMDAVEYHQYKPQLQQQISEVYHSLAREYDVMVLEGAGSPAEINLRDRDIVNMGMAEMADAPVLLVADIDRGGVFASIYGTLALLHPHEKARVKGVIINKFRGDIALLTPGLEQIEALTNVPVLGVMPWLDIDLEDEDGVALQNGKYQDTAEKALDIAVIRLPHIANFTDFNALAAQPDVRLRYVSQLSALGQPDLIILPGSKNTLGDLQWLHHSGLAAALLTLHQRNVPVIGICGGYQMLGKRIIDGVESGLEQMDGLGLLDVETEFAPDKVTTRVSGYCQIGLPGILKNCCDHPLEGYEIHMGVSHLGSAAIPFAQLTLRNGQAEQWVDGAVNGDGSVLGSYIHGLFDSHHFTRALLDSLRQRKGLAAFDGVTVNYAEHKQQQFDILASQMREHIDIDRILKLMKQHQQERAQ.

The 201-residue stretch at 251-451 folds into the GATase cobBQ-type domain; it reads ALDIAVIRLP…IHGLFDSHHF (201 aa). Cys332 acts as the Nucleophile in catalysis. Residue His443 is part of the active site.

Belongs to the CobB/CobQ family. CobQ subfamily.

It participates in cofactor biosynthesis; adenosylcobalamin biosynthesis. In terms of biological role, catalyzes amidations at positions B, D, E, and G on adenosylcobyrinic A,C-diamide. NH(2) groups are provided by glutamine, and one molecule of ATP is hydrogenolyzed for each amidation. This is Cobyric acid synthase from Yersinia enterocolitica serotype O:8 / biotype 1B (strain NCTC 13174 / 8081).